Reading from the N-terminus, the 1485-residue chain is Sex-determining transformer protein 2 (1485 aa).

The first 28 residues, 1-28, serve as a signal peptide directing secretion; the sequence is MSLRSNKLLVAAVIFTVVTFGLLLTSSI. A run of 9 helical transmembrane segments spans residues 438-458, 490-510, 584-604, 732-752, 923-943, 950-970, 980-1000, 1033-1053, and 1063-1083; these read VVYFILFIRCVLLIFFAFFAW, IELNSELLGYIILLTIVNTYL, WPFISILFVPITGCYWYFVDI, GILLYGSAVLFVLLSVAVMLI, LLASGILSAFFALIVVIFSIT, LIFSFFVIGSRLEIAAVISLF, DSAVLVGFLVAWAPFYELSLF, AQVFAIVLAASLIIAVVAGVV, and TVILIVVQLVAFGNSIAVLVA. Residues 1131 to 1271 form an interaction with fem-3 region; the sequence is DFHIRPTNMS…MLHMIEKVQK (141 aa). Residues 1143–1175 are disordered; it reads YAPPPAKKRAKQTNNETDPEKKEDEPGTSNANN. A helical membrane pass occupies residues 1181–1201; sequence AAHRLAILPWHFVLGGIPVDL. 3 disordered regions span residues 1228–1252, 1275–1306, and 1348–1384; these read SELEDQDDYSSESSVEDVESDPAPE, EKEAKEKVHQVESAQRRAPNFDDPNVAGPSHR, and EMPPVIDRTIPRDPRTEPPNLQECIQQNDDPSLPPHP. Residues 1275 to 1284 are compositionally biased toward basic and acidic residues; that stretch reads EKEAKEKVHQ. Positions 1401–1422 are MX regulatory domain; required for tra-1 binding; that stretch reads CEDVYWTYNDGRLPPNVAMPPR. Residues 1442–1485 are disordered; the sequence is PPGQPSIPIPAEAMALREERARAHREQEQRDNSQSPSPSPEPGL. Basic and acidic residues predominate over residues 1456–1472; that stretch reads ALREERARAHREQEQRD.

As to quaternary structure, interacts with tra-1 and fem-3. Somatic and germline tissues.

The protein resides in the membrane. Its function is as follows. Plays a major role in controlling sexual cell fates. Promotes female development in XX animals where it sequesters one or more of the FEM proteins to the membrane thereby freeing the tra-1 protein (a putative transcription factor) to enter the nucleus and promote female development. In XO animals it acts as a receptor for her-1 which prevents it from binding to FEM proteins thereby repressing the activity of tra-1. Negatively regulates male development when bound to fem-3 and is required together with tra-1 for promoting spermatogenesis. The polypeptide is Sex-determining transformer protein 2 (Caenorhabditis remanei (Caenorhabditis vulgaris)).